Here is a 209-residue protein sequence, read N- to C-terminus: 3-demethoxyubiquinol 3-hydroxylase (209 aa).

Residues Glu-58, Glu-88, His-91, Glu-140, Glu-172, and His-175 each contribute to the Fe cation site.

Belongs to the COQ7 family. Requires Fe cation as cofactor.

The protein localises to the cell membrane. The enzyme catalyses a 5-methoxy-2-methyl-3-(all-trans-polyprenyl)benzene-1,4-diol + AH2 + O2 = a 3-demethylubiquinol + A + H2O. The protein operates within cofactor biosynthesis; ubiquinone biosynthesis. Its function is as follows. Catalyzes the hydroxylation of 2-nonaprenyl-3-methyl-6-methoxy-1,4-benzoquinol during ubiquinone biosynthesis. The polypeptide is 3-demethoxyubiquinol 3-hydroxylase (Polaromonas sp. (strain JS666 / ATCC BAA-500)).